The following is a 1863-amino-acid chain: C-myc promoter-binding protein (1863 aa).

The MABP domain occupies Lys-42–Val-200. One can recognise a uDENN domain in the interval Val-192–Pro-364. A cDENN domain is found at Pro-385–Asn-521. The region spanning Leu-523–Ser-641 is the dDENN domain. Residue Ser-731 is modified to Phosphoserine. PPR repeat units lie at residues Trp-772–Pro-808 and Asp-809–Pro-843. The tract at residues Asp-905–Cys-952 is disordered. Positions Ser-912–Thr-921 are enriched in basic and acidic residues. Residues Arg-917 to Lys-933 carry the Bipartite nuclear localization signal motif. Residues Asp-936–Ser-949 are compositionally biased toward low complexity. Phosphoserine is present on residues Ser-1015, Ser-1035, Ser-1099, Ser-1151, and Ser-1152. Residues Thr-1075–Leu-1111 are disordered. The segment at Thr-1177–Arg-1202 is disordered. A phosphoserine mark is found at Ser-1225, Ser-1240, and Ser-1251. 2 disordered regions span residues Asn-1237–Phe-1306 and Ser-1348–Asp-1375. Over residues Thr-1269 to Leu-1279 the composition is skewed to basic and acidic residues. A Phosphoserine modification is found at Ser-1281. Composition is skewed to polar residues over residues Asp-1297 to Phe-1306 and Ser-1348 to Leu-1371. Phosphoserine occurs at positions 1508, 1587, 1589, and 1591.

As to expression, expressed ubiquitously. Highest expression in bone marrow, medium in peripheral blood lymphocytes and lowest in spleen. In brain, breast, and prostate, higher expression was seen in normal cells than in tumor cells. Expression is regulated in a growth- and cell cycle-dependent manner.

It is found in the nucleus. In terms of biological role, probable guanine nucleotide exchange factor (GEF) which may activate RAB10. Promotes the exchange of GDP to GTP, converting inactive GDP-bound Rab proteins into their active GTP-bound form. According to PubMed:8056341, it may bind to ISRE-like element (interferon-stimulated response element) of MYC P2 promoter. This chain is C-myc promoter-binding protein (DENND4A), found in Homo sapiens (Human).